A 351-amino-acid chain; its full sequence is MDKFRMMFQFLQSNQESFMNGICGIMALASAQMYSSFEFSCPCMPEYNYTYGIGLLIIPPIWFFLLGFVLNNNVSVLAEEWKRPTGRRTKDPSVLRYMLCSITQRSLIAPAVWVSVTLMDGKSFLCAFSINLDIEKFGNASLVIGMTETEKLKFLARIPCKDLFEDNEVRVAATRYIKCISQACGWMFLLMMTFTAFLIRAIRPCFTQAAFLKTKYWSHYIDIERKMFDETCKEHAKSFAKVCIHQYFENISGEMQNFHRHQSKDTSDAEEEEKQRSDEDKLLGIKAQEDMNKVLWNWHTCKPALALRKDHLDTESNGKLNGTMNGAVNGFAQGHTHDVAKKEWAVYYSKV.

Over 1–20 (MDKFRMMFQFLQSNQESFMN) the chain is Cytoplasmic. Positions 9–36 (QFLQSNQESFMNGICGIMALASAQMYSS) are central pore. A helical transmembrane segment spans residues 21–36 (GICGIMALASAQMYSS). Topologically, residues 37–48 (FEFSCPCMPEYN) are extracellular. Disulfide bonds link C41–C126 and C43–C160. A helical transmembrane segment spans residues 49–71 (YTYGIGLLIIPPIWFFLLGFVLN). The interval 62–69 (WFFLLGFV) is phospholipid-binding. Residues 72-98 (NNVSVLAEEWKRPTGRRTKDPSVLRYM) lie on the Cytoplasmic side of the membrane. A helical transmembrane segment spans residues 99-124 (LCSITQRSLIAPAVWVSVTLMDGKSF). C100 is lipidated: S-palmitoyl cysteine. The segment at 104 to 116 (QRSLIAPAVWVSV) is phospholipid-binding. The Extracellular portion of the chain corresponds to 125–177 (LCAFSINLDIEKFGNASLVIGMTETEKLKFLARIPCKDLFEDNEVRVAATRYI). N-linked (GlcNAc...) asparagine glycosylation occurs at N139. The helical transmembrane segment at 178 to 203 (KCISQACGWMFLLMMTFTAFLIRAIR) threads the bilayer. The interval 189-199 (LLMMTFTAFLI) is phospholipid-binding. The Cytoplasmic segment spans residues 204–351 (PCFTQAAFLK…KEWAVYYSKV (148 aa)). A lipid anchor (S-palmitoyl cysteine) is attached at C205. The interval 259 to 281 (HRHQSKDTSDAEEEEKQRSDEDK) is disordered. The span at 263–281 (SKDTSDAEEEEKQRSDEDK) shows a compositional bias: basic and acidic residues.

This sequence belongs to the CALHM family. Oligomerizes to form hexamers and octamers. Does not form gap junctions. Associates with CALHM3 as a pore-forming subunit in a hetero-hexameric channel complex. Post-translationally, N-glycosylated. Palmitoylated.

Its subcellular location is the cell membrane. The protein resides in the endoplasmic reticulum membrane. It localises to the basolateral cell membrane. It catalyses the reaction ATP(in) = ATP(out). It carries out the reaction Ca(2+)(in) = Ca(2+)(out). The enzyme catalyses Mg(2+)(in) = Mg(2+)(out). The catalysed reaction is Na(+)(in) = Na(+)(out). It catalyses the reaction K(+)(in) = K(+)(out). It carries out the reaction Li(+)(in) = Li(+)(out). The enzyme catalyses Rb(+)(in) = Rb(+)(out). The catalysed reaction is Cs(+)(in) = Cs(+)(out). It catalyses the reaction chloride(in) = chloride(out). Its activity is regulated as follows. Activated in response to membrane depolarization and low extracellular Ca(2+) concentration. Inhibited by ruthenium red. In terms of biological role, pore-forming subunit of a voltage-gated ion channel. Has poor ion selectivity and forms a wide pore that mediates permeation of small ions including Ca(2+), Na(+), K(+) and Cl(-), as well as larger ions such as ATP(4-). The chain is Calcium homeostasis modulator 1 from Oryzias latipes (Japanese rice fish).